Here is a 342-residue protein sequence, read N- to C-terminus: P21 prophage-derived major head protein (342 aa).

This sequence belongs to the lambda phage major capsid protein family.

The polypeptide is P21 prophage-derived major head protein (Escherichia coli O6:H1 (strain CFT073 / ATCC 700928 / UPEC)).